Consider the following 368-residue polypeptide: Quinolinate synthase (368 aa).

Iminosuccinate is bound by residues histidine 46 and serine 63. Cysteine 110 contacts [4Fe-4S] cluster. Iminosuccinate contacts are provided by residues 141–143 and serine 162; that span reads YVN. Position 230 (cysteine 230) interacts with [4Fe-4S] cluster. Iminosuccinate is bound by residues 256–258 and threonine 273; that span reads HPE. [4Fe-4S] cluster is bound at residue cysteine 320.

This sequence belongs to the quinolinate synthase family. Type 3 subfamily. The cofactor is [4Fe-4S] cluster.

Its subcellular location is the cytoplasm. The catalysed reaction is iminosuccinate + dihydroxyacetone phosphate = quinolinate + phosphate + 2 H2O + H(+). The protein operates within cofactor biosynthesis; NAD(+) biosynthesis; quinolinate from iminoaspartate: step 1/1. Its function is as follows. Catalyzes the condensation of iminoaspartate with dihydroxyacetone phosphate to form quinolinate. The chain is Quinolinate synthase from Bacillus cereus (strain Q1).